The chain runs to 139 residues: D-ribose pyranase (139 aa).

The active-site Proton donor is His20. Substrate contacts are provided by residues Asp28, His106, and 128–130 (YAN).

Belongs to the RbsD / FucU family. RbsD subfamily. Homodecamer.

The protein localises to the cytoplasm. It carries out the reaction beta-D-ribopyranose = beta-D-ribofuranose. It participates in carbohydrate metabolism; D-ribose degradation; D-ribose 5-phosphate from beta-D-ribopyranose: step 1/2. Catalyzes the interconversion of beta-pyran and beta-furan forms of D-ribose. This is D-ribose pyranase from Escherichia coli (strain 55989 / EAEC).